The primary structure comprises 394 residues: MRFSVVETFHGHRGRLGNICGLRIGTGEQCLDTPTCLLYTQAGSAPHLTRDMLHKLGDVENLPALFPLPPITSFVDSVMQFGKGLGSFVALQSHPSFIRIQDPMVTTPSGFNDKAGVSVWDQGGRVHLNPLSFTRMMEAFQPTCYQALCDSDTPQDASRKRLQRAVDRSVSLLDQCLAMKADSSCLQHSAILGSVQGGYNRDFREISAKETAKRDVDGFVIEGFHVNGPQTKSLKFEEVAEILEEVIALLPQDKPRFLHGVLRPEFILKAVLYGIDIFDASLAHAATEAGCALVFNCSSDKDLELMLGRDLLDQELEMDMKNARHREDFVPLLESCACYACTNFTRAYIHHLLNTGEMLGQVLLSLHNIHHFLGFLKSIRKFMVQHGAKELNGN.

Positions 336, 338, 341, and 367 each coordinate Zn(2+).

It belongs to the queuine tRNA-ribosyltransferase family. QTRT2 subfamily. In terms of assembly, heterodimer of a catalytic subunit and an accessory subunit. It depends on Zn(2+) as a cofactor.

It is found in the cytoplasm. Functionally, non-catalytic subunit of the queuine tRNA-ribosyltransferase (TGT) that catalyzes the base-exchange of a guanine (G) residue with queuine (Q) at position 34 (anticodon wobble position) in tRNAs with GU(N) anticodons (tRNA-Asp, -Asn, -His and -Tyr), resulting in the hypermodified nucleoside queuosine (7-(((4,5-cis-dihydroxy-2-cyclopenten-1-yl)amino)methyl)-7-deazaguanosine). In Ixodes scapularis (Black-legged tick), this protein is Queuine tRNA-ribosyltransferase accessory subunit 2.